The sequence spans 111 residues: Cyanovirin-N homolog (111 aa).

The protein belongs to the cyanovirin-N family.

Its function is as follows. Mannose-binding lectin. The protein is Cyanovirin-N homolog of Neurospora crassa (strain ATCC 24698 / 74-OR23-1A / CBS 708.71 / DSM 1257 / FGSC 987).